We begin with the raw amino-acid sequence, 39 residues long: Photosystem II reaction center protein J (39 aa).

Residues 7–27 (IPLWLVATIAGLGVIAVLGLF) form a helical membrane-spanning segment.

It belongs to the PsbJ family. PSII is composed of 1 copy each of membrane proteins PsbA, PsbB, PsbC, PsbD, PsbE, PsbF, PsbH, PsbI, PsbJ, PsbK, PsbL, PsbM, PsbT, PsbX, PsbY, PsbZ, Psb30/Ycf12, peripheral proteins PsbO, CyanoQ (PsbQ), PsbU, PsbV and a large number of cofactors. It forms dimeric complexes.

It localises to the cellular thylakoid membrane. One of the components of the core complex of photosystem II (PSII). PSII is a light-driven water:plastoquinone oxidoreductase that uses light energy to abstract electrons from H(2)O, generating O(2) and a proton gradient subsequently used for ATP formation. It consists of a core antenna complex that captures photons, and an electron transfer chain that converts photonic excitation into a charge separation. The sequence is that of Photosystem II reaction center protein J from Microcystis aeruginosa (strain NIES-843 / IAM M-2473).